Reading from the N-terminus, the 987-residue chain is Transposase for transposon Tn4430 (987 aa).

It belongs to the transposase 7 family.

Required for transposition of transposon Tn4430. This Bacillus thuringiensis protein is Transposase for transposon Tn4430 (tnpA).